Here is a 526-residue protein sequence, read N- to C-terminus: Peptide chain release factor 3 (526 aa).

Residues 8 to 277 (GKRRTFAIIS…GLTDWAPAPQ (270 aa)) form the tr-type G domain. Residues 17 to 24 (SHPDAGKT), 85 to 89 (DTPGH), and 139 to 142 (NKLD) contribute to the GTP site.

The protein belongs to the TRAFAC class translation factor GTPase superfamily. Classic translation factor GTPase family. PrfC subfamily.

The protein resides in the cytoplasm. Increases the formation of ribosomal termination complexes and stimulates activities of RF-1 and RF-2. It binds guanine nucleotides and has strong preference for UGA stop codons. It may interact directly with the ribosome. The stimulation of RF-1 and RF-2 is significantly reduced by GTP and GDP, but not by GMP. In Aliivibrio fischeri (strain MJ11) (Vibrio fischeri), this protein is Peptide chain release factor 3.